The chain runs to 365 residues: Histidinol-phosphate aminotransferase 2 (365 aa).

N6-(pyridoxal phosphate)lysine is present on Lys-222.

The protein belongs to the class-II pyridoxal-phosphate-dependent aminotransferase family. Histidinol-phosphate aminotransferase subfamily. As to quaternary structure, homodimer. The cofactor is pyridoxal 5'-phosphate.

It catalyses the reaction L-histidinol phosphate + 2-oxoglutarate = 3-(imidazol-4-yl)-2-oxopropyl phosphate + L-glutamate. It participates in amino-acid biosynthesis; L-histidine biosynthesis; L-histidine from 5-phospho-alpha-D-ribose 1-diphosphate: step 7/9. The sequence is that of Histidinol-phosphate aminotransferase 2 (hisC2) from Bordetella bronchiseptica (strain ATCC BAA-588 / NCTC 13252 / RB50) (Alcaligenes bronchisepticus).